Here is a 132-residue protein sequence, read N- to C-terminus: Small ribosomal subunit protein uS8 (132 aa).

The protein belongs to the universal ribosomal protein uS8 family. As to quaternary structure, part of the 30S ribosomal subunit. Contacts proteins S5 and S12.

Its function is as follows. One of the primary rRNA binding proteins, it binds directly to 16S rRNA central domain where it helps coordinate assembly of the platform of the 30S subunit. This chain is Small ribosomal subunit protein uS8, found in Coprothermobacter proteolyticus (strain ATCC 35245 / DSM 5265 / OCM 4 / BT).